Here is a 111-residue protein sequence, read N- to C-terminus: Cytochrome b-c1 complex subunit 7 (111 aa).

Ala-2 bears the N-acetylalanine mark. Lys-12 is modified (N6-acetyllysine; alternate). Position 12 is an N6-succinyllysine; alternate (Lys-12). The residue at position 19 (Lys-19) is an N6-acetyllysine. Residue Lys-78 is modified to N6-acetyllysine; alternate. Lys-78 is modified (N6-succinyllysine; alternate). Position 83 is an N6-acetyllysine (Lys-83). Lys-88 carries the post-translational modification N6-acetyllysine; alternate. Lys-88 bears the N6-succinyllysine; alternate mark. Residue Lys-96 is modified to N6-acetyllysine.

It belongs to the UQCRB/QCR7 family. In terms of assembly, component of the ubiquinol-cytochrome c oxidoreductase (cytochrome b-c1 complex, complex III, CIII), a multisubunit enzyme composed of 11 subunits. The complex is composed of 3 respiratory subunits cytochrome b, cytochrome c1 and Rieske protein UQCRFS1, 2 core protein subunits UQCRC1/QCR1 and UQCRC2/QCR2, and 6 low-molecular weight protein subunits UQCRH/QCR6, UQCRB/QCR7, UQCRQ/QCR8, UQCR10/QCR9, UQCR11/QCR10 and subunit 9, the cleavage product of Rieske protein UQCRFS1. The complex exists as an obligatory dimer and forms supercomplexes (SCs) in the inner mitochondrial membrane with NADH-ubiquinone oxidoreductase (complex I, CI) and cytochrome c oxidase (complex IV, CIV), resulting in different assemblies (supercomplex SCI(1)III(2)IV(1) and megacomplex MCI(2)III(2)IV(2)).

It is found in the mitochondrion inner membrane. Functionally, component of the ubiquinol-cytochrome c oxidoreductase, a multisubunit transmembrane complex that is part of the mitochondrial electron transport chain which drives oxidative phosphorylation. The respiratory chain contains 3 multisubunit complexes succinate dehydrogenase (complex II, CII), ubiquinol-cytochrome c oxidoreductase (cytochrome b-c1 complex, complex III, CIII) and cytochrome c oxidase (complex IV, CIV), that cooperate to transfer electrons derived from NADH and succinate to molecular oxygen, creating an electrochemical gradient over the inner membrane that drives transmembrane transport and the ATP synthase. The cytochrome b-c1 complex catalyzes electron transfer from ubiquinol to cytochrome c, linking this redox reaction to translocation of protons across the mitochondrial inner membrane, with protons being carried across the membrane as hydrogens on the quinol. In the process called Q cycle, 2 protons are consumed from the matrix, 4 protons are released into the intermembrane space and 2 electrons are passed to cytochrome c. The protein is Cytochrome b-c1 complex subunit 7 (Uqcrb) of Mus musculus (Mouse).